The chain runs to 534 residues: NEDD8-activating enzyme E1 regulatory subunit (534 aa).

Alanine 2 carries the N-acetylalanine modification. Lysine 6 and lysine 341 each carry N6-acetyllysine. Positions 331-344 (DMIADSNKYIKLQN) are interaction with UBA3.

The protein belongs to the ubiquitin-activating E1 family. ULA1 subfamily. In terms of assembly, heterodimer of UBA3 and NAE1. The complex binds NEDD8 and UBE2M. Binds APP and TP53BP2. Ubiquitinated by TRIP12, leading to its degradation by the proteasome. As to expression, expressed throughout the brain. In hippocampus, strongly expressed in granule cells and in the pyramidal cell layer. Strongly expressed in the piriform cortex. In the cerebellum, expressed only in Purkinje cells.

It is found in the cell membrane. It functions in the pathway protein modification; protein neddylation. With respect to regulation, binding of TP53BP2 to the regulatory subunit NAE1 decreases neddylation activity. Its function is as follows. Regulatory subunit of the dimeric UBA3-NAE1 E1 enzyme. E1 activates NEDD8 by first adenylating its C-terminal glycine residue with ATP, thereafter linking this residue to the side chain of the catalytic cysteine, yielding a NEDD8-UBA3 thioester and free AMP. E1 finally transfers NEDD8 to the catalytic cysteine of UBE2M. Necessary for cell cycle progression through the S-M checkpoint. Overexpression of NAE1 causes apoptosis through deregulation of NEDD8 conjugation. The covalent attachment of NEDD8 to target proteins is known as 'neddylation' and the process is involved in the regulation of cell growth, viability and development. The chain is NEDD8-activating enzyme E1 regulatory subunit (Nae1) from Rattus norvegicus (Rat).